The chain runs to 127 residues: Large ribosomal subunit protein uL24A (127 aa).

Belongs to the universal ribosomal protein uL24 family. Component of the large ribosomal subunit (LSU). Mature yeast ribosomes consist of a small (40S) and a large (60S) subunit. The 40S small subunit contains 1 molecule of ribosomal RNA (18S rRNA) and 33 different proteins (encoded by 57 genes). The large 60S subunit contains 3 rRNA molecules (25S, 5.8S and 5S rRNA) and 46 different proteins (encoded by 81 genes).

Its subcellular location is the cytoplasm. Component of the ribosome, a large ribonucleoprotein complex responsible for the synthesis of proteins in the cell. The small ribosomal subunit (SSU) binds messenger RNAs (mRNAs) and translates the encoded message by selecting cognate aminoacyl-transfer RNA (tRNA) molecules. The large subunit (LSU) contains the ribosomal catalytic site termed the peptidyl transferase center (PTC), which catalyzes the formation of peptide bonds, thereby polymerizing the amino acids delivered by tRNAs into a polypeptide chain. The nascent polypeptides leave the ribosome through a tunnel in the LSU and interact with protein factors that function in enzymatic processing, targeting, and the membrane insertion of nascent chains at the exit of the ribosomal tunnel. The chain is Large ribosomal subunit protein uL24A from Saccharomyces cerevisiae (strain ATCC 204508 / S288c) (Baker's yeast).